We begin with the raw amino-acid sequence, 339 residues long: Isopentenyl-diphosphate delta-isomerase (339 aa).

7-8 (RK) contacts substrate. FMN is bound by residues S65, 66–68 (SMT), S96, and N125. 96-98 (SQR) is a binding site for substrate. Q160 is a binding site for substrate. Position 161 (E161) interacts with Mg(2+). Residues K192, T222, and 293–294 (AG) contribute to the FMN site.

The protein belongs to the IPP isomerase type 2 family. In terms of assembly, homooctamer. Dimer of tetramers. FMN serves as cofactor. NADPH is required as a cofactor. It depends on Mg(2+) as a cofactor.

It localises to the cytoplasm. It catalyses the reaction isopentenyl diphosphate = dimethylallyl diphosphate. In terms of biological role, involved in the biosynthesis of isoprenoids. Catalyzes the 1,3-allylic rearrangement of the homoallylic substrate isopentenyl (IPP) to its allylic isomer, dimethylallyl diphosphate (DMAPP). The chain is Isopentenyl-diphosphate delta-isomerase from Vibrio campbellii (strain ATCC BAA-1116).